The following is a 154-amino-acid chain: MGKMIIDLQIASADESGLPTAAQIEQWATAAVQPQSGEVEMTVRIVDETESHALNFNYRGKDHPTNVLSFPFECPDEVELPLLGDLVICRQVVEREAQEQEKPLIAHWAHMVVHGSLHLLGYDHIEDDEAEEMESLETQIMMGLGFVDPYLSEK.

Zn(2+) contacts are provided by histidine 114, histidine 118, and histidine 124.

This sequence belongs to the endoribonuclease YbeY family. Zn(2+) is required as a cofactor.

The protein localises to the cytoplasm. In terms of biological role, single strand-specific metallo-endoribonuclease involved in late-stage 70S ribosome quality control and in maturation of the 3' terminus of the 16S rRNA. The chain is Endoribonuclease YbeY from Aggregatibacter actinomycetemcomitans (Actinobacillus actinomycetemcomitans).